Consider the following 607-residue polypeptide: Guanine nucleotide-binding protein-like 1 (607 aa).

Residues 1 to 14 (MPRKKPFSVKQKKK) show a composition bias toward basic residues. Residues 1 to 81 (MPRKKPFSVK…GPRGYDPNRY (81 aa)) form a disordered region. Residues 15–26 (QLQDKRERKRGL) show a composition bias toward basic and acidic residues. S32, S33, and S34 each carry phosphoserine. 2 positions are modified to phosphothreonine: T48 and T50. S51 and S68 each carry phosphoserine. The region spanning 178 to 418 (WRQLWRVLEM…LCDCPGLIFP (241 aa)) is the CP-type G domain. Position 225–228 (225–228 (NKVD)) interacts with GTP. At S324 the chain carries Phosphoserine. Residues 367 to 374 (GFPNVGKS) and 411 to 415 (DCPGL) each bind GTP. The tract at residues 547–607 (GPAGDEEEEE…PYALLGEDEC (61 aa)) is disordered. The segment covering 550–584 (GDEEEEEEEELSSSCEEEGEEDRDADEEGEGDEET) has biased composition (acidic residues). Phosphoserine occurs at positions 561, 562, and 563.

Belongs to the TRAFAC class YlqF/YawG GTPase family.

Its function is as follows. Possible regulatory or functional link with the histocompatibility cluster. The protein is Guanine nucleotide-binding protein-like 1 (GNL1) of Pan troglodytes (Chimpanzee).